Reading from the N-terminus, the 196-residue chain is Large ribosomal subunit protein uL5 (196 aa).

The protein belongs to the universal ribosomal protein uL5 family. As to quaternary structure, part of the 50S ribosomal subunit; part of the 5S rRNA/L5/L18/L25 subcomplex. Contacts the 5S rRNA and the P site tRNA. Forms a bridge to the 30S subunit in the 70S ribosome.

This is one of the proteins that bind and probably mediate the attachment of the 5S RNA into the large ribosomal subunit, where it forms part of the central protuberance. In the 70S ribosome it contacts protein S13 of the 30S subunit (bridge B1b), connecting the 2 subunits; this bridge is implicated in subunit movement. Contacts the P site tRNA; the 5S rRNA and some of its associated proteins might help stabilize positioning of ribosome-bound tRNAs. This Chlorobium phaeobacteroides (strain BS1) protein is Large ribosomal subunit protein uL5.